Here is a 198-residue protein sequence, read N- to C-terminus: MRIGVIAIQGDVSEHVESLERALAERGATAEIVNIKHKGIVPTCDGLVFPGGESTTLGRLILREGIDAEIKDAKEQGIPIMGTCAGLILTAKAGDSQVEKTHQHLLGLMDIKVNRNAFGRQFQSFEVGLEISFLDSPYNAVFIRAPAITEAGEGVKVLASIDGKIVAAEQDNVLAFAFHPELTDDMRVHQYFLDKLFN.

52–54 (GES) is an L-glutamine binding site. C84 serves as the catalytic Nucleophile. L-glutamine contacts are provided by residues R115 and 143–144 (IR). Residues H179 and E181 each act as charge relay system in the active site.

It belongs to the glutaminase PdxT/SNO family. In terms of assembly, in the presence of PdxS, forms a dodecamer of heterodimers. Only shows activity in the heterodimer.

It catalyses the reaction aldehydo-D-ribose 5-phosphate + D-glyceraldehyde 3-phosphate + L-glutamine = pyridoxal 5'-phosphate + L-glutamate + phosphate + 3 H2O + H(+). The enzyme catalyses L-glutamine + H2O = L-glutamate + NH4(+). It participates in cofactor biosynthesis; pyridoxal 5'-phosphate biosynthesis. Catalyzes the hydrolysis of glutamine to glutamate and ammonia as part of the biosynthesis of pyridoxal 5'-phosphate. The resulting ammonia molecule is channeled to the active site of PdxS. The polypeptide is Pyridoxal 5'-phosphate synthase subunit PdxT (Methanococcoides burtonii (strain DSM 6242 / NBRC 107633 / OCM 468 / ACE-M)).